A 132-amino-acid chain; its full sequence is S-protein homolog 8 (132 aa).

Positions 1–20 (MHSLSWFLLVIGLSVGLSSG) are cleaved as a signal peptide.

It belongs to the plant self-incompatibility (S1) protein family. As to expression, mostly expressed in seedlings, stems, leaves and floral tissues, and, to a lower extent, in roots.

Its subcellular location is the secreted. In Arabidopsis thaliana (Mouse-ear cress), this protein is S-protein homolog 8.